The following is a 476-amino-acid chain: Transposase for transposon Tn5 (476 aa).

The tract at residues 1–70 (MITSALHRAA…YRFIRNPNVS (70 aa)) is interaction with DNA. Residues aspartate 97 and aspartate 188 each coordinate Mg(2+). Interaction with DNA regions lie at residues 237 to 255 (YQIS…KRKN) and 319 to 348 (YTHR…EPDN). Glutamate 326 provides a ligand contact to Mg(2+). Residues 369 to 476 (SFTLPQALRA…KDLMAQGIKI (108 aa)) form an important for dimerization region.

The protein belongs to the transposase 11 family. As to quaternary structure, monomer. Homodimer of tnp (isoform 1), and heterodimer of tnp (isoform 1) and inh (isoform 2). The cofactor is Mg(2+).

In terms of biological role, mediates transposition of transposon Tn5 by a 'cut and paste' mechanism. First, the monomeric transposase binds the 19 bp inverted DNA repeats flanking the transposon. Then, dimerization of the DNA-bound transposase creates a synaptic DNA complex. After nicking of the first DNA strand, excision of the transposon proceeds through a series of intermediates. The transposase then mediates the insertion of the transposon at a new site by strand transfer. The activity of the wild-type transposase is very low, and is further inhibited by dimerization with the transposase inhibitor (inh). The sequence is that of Transposase for transposon Tn5 (tnpA) from Escherichia coli.